Here is a 425-residue protein sequence, read N- to C-terminus: MSSFQCVKGTRDILPDESLLWSFVSSHFHHVASLYGFREIRTPMFEYTDLFQRGIGATTDIVGKEMFSFQPDPAGRSITLRPEMTAGVMRAALQNNLLAQAPLHKLFYIGELFRKERPQAGRQRQFNQCGAELLGVSSPAAVAEVMSLMMHFFGALGLTGLTLKVNTLGNAEERLAYREALQAYFAPHRAMLDASSQERLEKNPLRILDSKNPALQELIAAAPRLYDYLQEASLRDFEKVLFYLTERRISYTIDYRLVRGLDYYCHTAFEVTSNELGAQDAIGGGGRYDALARELGSATDIPAVGFAVGMERLLIVLEKQGLLGNRHARPPRLYVVVQQQEMLDHALQLVWRLRNGGIRSELDLAGRSMKAQMREANKLGALYALFVGASECASGKYGLKNLATSEQTDLSIEAVMQLLHDHVTE.

This sequence belongs to the class-II aminoacyl-tRNA synthetase family. Homodimer.

Its subcellular location is the cytoplasm. The catalysed reaction is tRNA(His) + L-histidine + ATP = L-histidyl-tRNA(His) + AMP + diphosphate + H(+). This chain is Histidine--tRNA ligase, found in Chlorobium chlorochromatii (strain CaD3).